A 35-amino-acid chain; its full sequence is 5'-methylthioadenosine/S-adenosylhomocysteine nucleosidase (35 aa).

Glutamate 12 serves as the catalytic Proton acceptor.

It belongs to the PNP/UDP phosphorylase family. MtnN subfamily. In terms of assembly, homodimer.

The enzyme catalyses S-adenosyl-L-homocysteine + H2O = S-(5-deoxy-D-ribos-5-yl)-L-homocysteine + adenine. The catalysed reaction is S-methyl-5'-thioadenosine + H2O = 5-(methylsulfanyl)-D-ribose + adenine. It carries out the reaction 5'-deoxyadenosine + H2O = 5-deoxy-D-ribose + adenine. Its pathway is amino-acid biosynthesis; L-methionine biosynthesis via salvage pathway; S-methyl-5-thio-alpha-D-ribose 1-phosphate from S-methyl-5'-thioadenosine (hydrolase route): step 1/2. Catalyzes the irreversible cleavage of the glycosidic bond in both 5'-methylthioadenosine (MTA) and S-adenosylhomocysteine (SAH/AdoHcy) to adenine and the corresponding thioribose, 5'-methylthioribose and S-ribosylhomocysteine, respectively. Also cleaves 5'-deoxyadenosine, a toxic by-product of radical S-adenosylmethionine (SAM) enzymes, into 5-deoxyribose and adenine. Thus, is required for in vivo function of the radical SAM enzymes biotin synthase and lipoic acid synthase, that are inhibited by 5'-deoxyadenosine accumulation. This chain is 5'-methylthioadenosine/S-adenosylhomocysteine nucleosidase (mtnN), found in Klebsiella pneumoniae.